Reading from the N-terminus, the 399-residue chain is Probable peptidoglycan glycosyltransferase FtsW (399 aa).

Residues 1–25 lie on the Cytoplasmic side of the membrane; it reads MTAAAPSKPLPRTPRVRQAYPLDYP. Residues 26 to 46 traverse the membrane as a helical segment; it reads LLLCALGLLAFGWVMVTSASM. Over 47–64 the chain is Periplasmic; sequence SIAEACCQNPFHYSIRHA. The chain crosses the membrane as a helical span at residues 65-85; the sequence is IALGLALMLGLMAYSVPSHWW. At 86–88 the chain is on the cytoplasmic side; it reads ERH. A helical transmembrane segment spans residues 89 to 109; the sequence is GVWLFLASALVLILVLIPGIG. Residues 110 to 117 are Periplasmic-facing; it reads RTVNGATR. The chain crosses the membrane as a helical span at residues 118–138; the sequence is WIPLGPLNVQPSEFVKLFAIL. Topologically, residues 139–153 are cytoplasmic; it reads YVAGYLVRHADKVVN. Residues 154-174 traverse the membrane as a helical segment; sequence QLSGFIRPLILIGAAALLILM. Residues 175-177 lie on the Periplasmic side of the membrane; it reads QPD. 2 helical membrane-spanning segments follow: residues 178–198 and 199–219; these read FGTT…GGAS and LLPF…LVIF. The Periplasmic portion of the chain corresponds to 220-281; sequence SPYRLERVVS…PEAHTDFLPS (62 aa). A helical membrane pass occupies residues 282–302; that stretch reads VIGEELGLAGMLVLIAAFVFL. Over 303-326 the chain is Cytoplasmic; that stretch reads SWRAMSIGVRAEALKRPFESYVAQ. Residues 327–347 form a helical membrane-spanning segment; it reads GIGLWIGLQSFVNLGVNVGIL. Topologically, residues 348–353 are periplasmic; it reads PTKGLT. Residues 354–374 form a helical membrane-spanning segment; the sequence is LPFMSYGSNSLMVGCMAVAIL. At 375–399 the chain is on the cytoplasmic side; it reads LRIDVMLRRVESEAKFKRGTPWSRA.

Belongs to the SEDS family. FtsW subfamily.

Its subcellular location is the cell inner membrane. It carries out the reaction [GlcNAc-(1-&gt;4)-Mur2Ac(oyl-L-Ala-gamma-D-Glu-L-Lys-D-Ala-D-Ala)](n)-di-trans,octa-cis-undecaprenyl diphosphate + beta-D-GlcNAc-(1-&gt;4)-Mur2Ac(oyl-L-Ala-gamma-D-Glu-L-Lys-D-Ala-D-Ala)-di-trans,octa-cis-undecaprenyl diphosphate = [GlcNAc-(1-&gt;4)-Mur2Ac(oyl-L-Ala-gamma-D-Glu-L-Lys-D-Ala-D-Ala)](n+1)-di-trans,octa-cis-undecaprenyl diphosphate + di-trans,octa-cis-undecaprenyl diphosphate + H(+). It participates in cell wall biogenesis; peptidoglycan biosynthesis. Peptidoglycan polymerase that is essential for cell division. This Allochromatium vinosum (strain ATCC 17899 / DSM 180 / NBRC 103801 / NCIMB 10441 / D) (Chromatium vinosum) protein is Probable peptidoglycan glycosyltransferase FtsW.